The following is a 782-amino-acid chain: E3 UFM1-protein ligase 1 homolog (782 aa).

Positions 405–478 are disordered; sequence VSTQELEDDG…TRGGGGASKK (74 aa).

It belongs to the UFL1 family.

E3 UFM1-protein ligase that mediates ufmylation of target proteins. The sequence is that of E3 UFM1-protein ligase 1 homolog from Drosophila simulans (Fruit fly).